The primary structure comprises 1178 residues: DNA-directed RNA polymerase subunit beta' (1178 aa).

Residues Cys-60, Cys-62, Cys-75, and Cys-78 each coordinate Zn(2+). 3 residues coordinate Mg(2+): Asp-450, Asp-452, and Asp-454. Cys-795, Cys-869, Cys-876, and Cys-879 together coordinate Zn(2+).

It belongs to the RNA polymerase beta' chain family. In terms of assembly, the RNAP catalytic core consists of 2 alpha, 1 beta, 1 beta' and 1 omega subunit. When a sigma factor is associated with the core the holoenzyme is formed, which can initiate transcription. Mg(2+) serves as cofactor. Requires Zn(2+) as cofactor.

It carries out the reaction RNA(n) + a ribonucleoside 5'-triphosphate = RNA(n+1) + diphosphate. Its function is as follows. DNA-dependent RNA polymerase catalyzes the transcription of DNA into RNA using the four ribonucleoside triphosphates as substrates. The polypeptide is DNA-directed RNA polymerase subunit beta' (Clostridium botulinum (strain Okra / Type B1)).